The primary structure comprises 216 residues: 3-isopropylmalate dehydratase small subunit (216 aa).

It belongs to the LeuD family. LeuD type 1 subfamily. In terms of assembly, heterodimer of LeuC and LeuD.

It catalyses the reaction (2R,3S)-3-isopropylmalate = (2S)-2-isopropylmalate. It participates in amino-acid biosynthesis; L-leucine biosynthesis; L-leucine from 3-methyl-2-oxobutanoate: step 2/4. Functionally, catalyzes the isomerization between 2-isopropylmalate and 3-isopropylmalate, via the formation of 2-isopropylmaleate. In Burkholderia mallei (strain NCTC 10247), this protein is 3-isopropylmalate dehydratase small subunit.